Here is a 427-residue protein sequence, read N- to C-terminus: 3-phosphoshikimate 1-carboxyvinyltransferase (427 aa).

A phosphoenolpyruvate-binding site is contributed by lysine 20. Positions 21 and 25 each coordinate 3-phosphoshikimate. Phosphoenolpyruvate contacts are provided by glycine 92 and arginine 120. Residues serine 166, alanine 167, glutamine 168, aspartate 312, and lysine 339 each coordinate 3-phosphoshikimate. Glutamine 168 is a binding site for phosphoenolpyruvate. The active-site Proton acceptor is aspartate 312. Residues arginine 343 and arginine 385 each coordinate phosphoenolpyruvate.

Homotetramer.

The protein localises to the cytoplasm. It carries out the reaction 3-phosphoshikimate + phosphoenolpyruvate = 5-O-(1-carboxyvinyl)-3-phosphoshikimate + phosphate. Its pathway is metabolic intermediate biosynthesis; chorismate biosynthesis; chorismate from D-erythrose 4-phosphate and phosphoenolpyruvate: step 6/7. Its activity is regulated as follows. Competitively inhibited by glyphosate. Activated by ammonium, rubidium or potassium ions. Its function is as follows. Catalyzes the transfer of the enolpyruvyl moiety of phosphoenolpyruvate (PEP) to the 5-hydroxyl of shikimate-3-phosphate (S3P) to produce enolpyruvyl shikimate-3-phosphate and inorganic phosphate. In Streptococcus pneumoniae serotype 4 (strain ATCC BAA-334 / TIGR4), this protein is 3-phosphoshikimate 1-carboxyvinyltransferase.